Here is an 887-residue protein sequence, read N- to C-terminus: Alanine--tRNA ligase (887 aa).

Residues His-564, His-568, Cys-676, and His-680 each contribute to the Zn(2+) site.

It belongs to the class-II aminoacyl-tRNA synthetase family. Requires Zn(2+) as cofactor.

The protein resides in the cytoplasm. It carries out the reaction tRNA(Ala) + L-alanine + ATP = L-alanyl-tRNA(Ala) + AMP + diphosphate. Functionally, catalyzes the attachment of alanine to tRNA(Ala) in a two-step reaction: alanine is first activated by ATP to form Ala-AMP and then transferred to the acceptor end of tRNA(Ala). Also edits incorrectly charged Ser-tRNA(Ala) and Gly-tRNA(Ala) via its editing domain. The polypeptide is Alanine--tRNA ligase (Sinorhizobium medicae (strain WSM419) (Ensifer medicae)).